Reading from the N-terminus, the 156-residue chain is Endoribonuclease YbeY (156 aa).

Residues H119, H123, and H129 each coordinate Zn(2+).

This sequence belongs to the endoribonuclease YbeY family. The cofactor is Zn(2+).

It localises to the cytoplasm. In terms of biological role, single strand-specific metallo-endoribonuclease involved in late-stage 70S ribosome quality control and in maturation of the 3' terminus of the 16S rRNA. This chain is Endoribonuclease YbeY, found in Buchnera aphidicola subsp. Cinara cedri (strain Cc).